We begin with the raw amino-acid sequence, 280 residues long: Band 7 protein AGAP004871 (280 aa).

Residues 23 to 43 traverse the membrane as a helical segment; it reads ILIFLSWVLVVLTMPFSLLVC.

This sequence belongs to the band 7/mec-2 family.

It is found in the membrane. In Anopheles gambiae (African malaria mosquito), this protein is Band 7 protein AGAP004871.